A 311-amino-acid chain; its full sequence is Glycine-betaine-binding protein (311 aa).

The first 23 residues, 1–23 (MNRLIRSLCLACAGLFAAGLAQA), serve as a signal peptide directing secretion.

Belongs to the OsmX family.

It localises to the periplasm. In terms of biological role, binds glycine-betaine. The chain is Glycine-betaine-binding protein from Pseudomonas aeruginosa (strain ATCC 15692 / DSM 22644 / CIP 104116 / JCM 14847 / LMG 12228 / 1C / PRS 101 / PAO1).